We begin with the raw amino-acid sequence, 521 residues long: Probable protein kinase UbiB (521 aa).

Residues S119–A497 form the Protein kinase domain. Residues V125–V133 and K151 each bind ATP. Catalysis depends on D286, which acts as the Proton acceptor. Residues Q496–V516 traverse the membrane as a helical segment.

Belongs to the ABC1 family. UbiB subfamily.

It is found in the cell inner membrane. It participates in cofactor biosynthesis; ubiquinone biosynthesis [regulation]. Is probably a protein kinase regulator of UbiI activity which is involved in aerobic coenzyme Q (ubiquinone) biosynthesis. The sequence is that of Probable protein kinase UbiB from Delftia acidovorans (strain DSM 14801 / SPH-1).